The following is a 190-amino-acid chain: dCTP deaminase, dUMP-forming (190 aa).

Residues K101–R106, D119, T127–E129, Q148, Y162, and Q174 each bind dCTP. E129 acts as the Proton donor/acceptor in catalysis. Residues G163–N190 are disordered.

It belongs to the dCTP deaminase family. As to quaternary structure, homotrimer.

It catalyses the reaction dCTP + 2 H2O = dUMP + NH4(+) + diphosphate. It functions in the pathway pyrimidine metabolism; dUMP biosynthesis; dUMP from dCTP: step 1/1. In terms of biological role, bifunctional enzyme that catalyzes both the deamination of dCTP to dUTP and the hydrolysis of dUTP to dUMP without releasing the toxic dUTP intermediate. This is dCTP deaminase, dUMP-forming from Mycolicibacterium gilvum (strain PYR-GCK) (Mycobacterium gilvum (strain PYR-GCK)).